A 158-amino-acid polypeptide reads, in one-letter code: Large ribosomal subunit protein uL15 (158 aa).

Residues 1 to 13 are compositionally biased toward basic and acidic residues; it reads MKLNEIKDNEGST. The tract at residues 1-45 is disordered; the sequence is MKLNEIKDNEGSTHSRKRLGRGIGSGSGKTGGRGVKGQKSRSGVA. A compositionally biased stretch (gly residues) spans 21 to 35; it reads RGIGSGSGKTGGRGV.

It belongs to the universal ribosomal protein uL15 family. In terms of assembly, part of the 50S ribosomal subunit.

Its function is as follows. Binds to the 23S rRNA. The polypeptide is Large ribosomal subunit protein uL15 (Rhizobium leguminosarum bv. trifolii (strain WSM2304)).